The following is an 865-amino-acid chain: Carbohydrate-responsive element-binding protein (865 aa).

2 disordered regions span residues 15-41 and 53-77; these read PRVV…AGGL and MVSS…LADF. Ser20, Ser23, and Ser25 each carry phosphoserine. Thr27 is modified (phosphothreonine). Ser196 is subject to Phosphoserine. Disordered stretches follow at residues 334–392 and 500–653; these read GILG…TKMP and QPRC…LSRG. Over residues 351 to 368 the composition is skewed to polar residues; that stretch reads GMTPLSGNTRLQARNSCS. Residues 515–533 show a composition bias toward low complexity; it reads ASPPTLTSATASPTATATA. Phosphoserine; by AMPK is present on Ser568. Residues 583–597 show a composition bias toward pro residues; it reads PPIPAPTPPRPPPGP. A phosphoserine mark is found at Ser615, Ser627, and Ser644. The region spanning 662-716 is the bHLH domain; the sequence is NRRITHISAEQKRRFNIKLGFDTLHGLVSTLSAQPSLKVSKATTLQKTAEYILML. The leucine-zipper stretch occupies residues 716 to 737; the sequence is LQQERAAMQEEAQQLRDEIEEL.

In terms of assembly, binds DNA as a heterodimer with TCFL4/MLX. Post-translationally, phosphorylation at Ser-568 by AMPK inactivates the DNA-binding activity.

Its subcellular location is the nucleus. Functionally, transcriptional repressor. Binds to the canonical and non-canonical E box sequences 5'-CACGTG-3'. The protein is Carbohydrate-responsive element-binding protein (Mlxipl) of Rattus norvegicus (Rat).